The sequence spans 251 residues: uncharacterized protein (251 aa).

Residues Thr-229–Thr-251 form a disordered region. Positions Ser-234 to Asn-245 are enriched in basic and acidic residues.

This is an uncharacterized protein from Acanthamoeba polyphaga (Amoeba).